Here is a 328-residue protein sequence, read N- to C-terminus: Phosphate acyltransferase (328 aa).

It belongs to the PlsX family. In terms of assembly, homodimer. Probably interacts with PlsY.

The protein resides in the cytoplasm. It catalyses the reaction a fatty acyl-[ACP] + phosphate = an acyl phosphate + holo-[ACP]. Its pathway is lipid metabolism; phospholipid metabolism. In terms of biological role, catalyzes the reversible formation of acyl-phosphate (acyl-PO(4)) from acyl-[acyl-carrier-protein] (acyl-ACP). This enzyme utilizes acyl-ACP as fatty acyl donor, but not acyl-CoA. The protein is Phosphate acyltransferase of Staphylococcus aureus (strain bovine RF122 / ET3-1).